A 320-amino-acid chain; its full sequence is MEIYGMVTGKAGKSGYGSASTAEDVTHSIDAKHLTAIITGGTSGIGLEAARVLGMRGAHVIIASRNTKAANDSKEMILQMYPNARIDCLQLDLSSIKSVRSFIHQFLALNVPLNILINNAGVMFCPFQLSEDGIESQFATNHIGHFLLTNLLLDKMKSSARESGIEGRIVNLSSIAHTYTYTEGIMFDYINDPDRYSEKKAYGQSKLANLLHSNALSRKLQEEGVNITINSVHPGLITTNLFRHSGLGMAVLKAMSFFLWKNIPQGAATTCYVALHPDLKDVTGKYFADCNVTTPSNFAIDTTLADKLWDFSIKLVESLP.

NADP(+) is bound by residues glycine 40–glycine 46, aspartate 92–leucine 93, asparagine 119, and threonine 140. Serine 174 provides a ligand contact to substrate. Catalysis depends on tyrosine 196, which acts as the Proton acceptor. The interaction with calmodulin stretch occupies residues aspartate 301 to glutamate 317.

This sequence belongs to the short-chain dehydrogenases/reductases (SDR) family. In terms of assembly, part of the Tic complex. Expressed in the dehiscence zone of developing pods.

It is found in the plastid. Its subcellular location is the chloroplast inner membrane. Functionally, involved in protein precursor import into chloroplasts. Maybe involved in pod abscission or dehiscence (pod shatter). The polypeptide is Short-chain dehydrogenase TIC 32 A, chloroplastic (Brassica napus (Rape)).